The sequence spans 546 residues: Chaperonin GroEL (546 aa).

Residues 29-32 (TLGP), lysine 50, 86-90 (DGTTT), glycine 414, and aspartate 494 each bind ATP. The tract at residues 525–546 (KKESAAPAMPGHDGMGGMGGMM) is disordered. Positions 537-546 (DGMGGMGGMM) are enriched in gly residues.

Belongs to the chaperonin (HSP60) family. Forms a cylinder of 14 subunits composed of two heptameric rings stacked back-to-back. Interacts with the co-chaperonin GroES.

It is found in the cytoplasm. The enzyme catalyses ATP + H2O + a folded polypeptide = ADP + phosphate + an unfolded polypeptide.. Together with its co-chaperonin GroES, plays an essential role in assisting protein folding. The GroEL-GroES system forms a nano-cage that allows encapsulation of the non-native substrate proteins and provides a physical environment optimized to promote and accelerate protein folding. This Bdellovibrio bacteriovorus (strain ATCC 15356 / DSM 50701 / NCIMB 9529 / HD100) protein is Chaperonin GroEL.